The following is a 214-amino-acid chain: MKHTSEPTSQPDTQAAESAQSSAAAAGQAASAYSSQAQRASADAQAIAGDEAAVAEATIEPDTAELRRQLEAADEKARQNYENWARAVAEGENIRRRAQDDVARAHKFAIEGFAEYLLPVMDSLQAALADASGDVAKLREGVELTLKQLNAAFEKGRVTELNPVGEKFDPHRHQAISMVPADQEANTVVNVLQRGYTLADRVLRPALVTVAAPK.

Over residues 1-13 the composition is skewed to polar residues; it reads MKHTSEPTSQPDT. A disordered region spans residues 1-61; the sequence is MKHTSEPTSQ…AAVAEATIEP (61 aa). The span at 14 to 57 shows a compositional bias: low complexity; that stretch reads QAAESAQSSAAAAGQAASAYSSQAQRASADAQAIAGDEAAVAEA.

The protein belongs to the GrpE family. Homodimer.

The protein resides in the cytoplasm. Participates actively in the response to hyperosmotic and heat shock by preventing the aggregation of stress-denatured proteins, in association with DnaK and GrpE. It is the nucleotide exchange factor for DnaK and may function as a thermosensor. Unfolded proteins bind initially to DnaJ; upon interaction with the DnaJ-bound protein, DnaK hydrolyzes its bound ATP, resulting in the formation of a stable complex. GrpE releases ADP from DnaK; ATP binding to DnaK triggers the release of the substrate protein, thus completing the reaction cycle. Several rounds of ATP-dependent interactions between DnaJ, DnaK and GrpE are required for fully efficient folding. This Ralstonia nicotianae (strain ATCC BAA-1114 / GMI1000) (Ralstonia solanacearum) protein is Protein GrpE.